The chain runs to 62 residues: ATP synthase subunit J, mitochondrial (62 aa).

A helical transmembrane segment spans residues 13–32 (IVKPLWPYAVGGVITFFLFA).

F-type ATP synthases have 2 components, the catalytic core F(1) and the membrane-embedded component F(0), linked together by a central stalk and a peripheral stalk. The central stalk, also called rotor shaft, is often seen as part of F(1). The peripheral stalk is seen as part of F(0). F(0) contains the membrane channel next to the rotor. F-type ATP synthases form dimers but each monomer functions independently in ATP generation. The dimer consists of 17 different polypeptides: ATP1 (subunit alpha, 3 molecules per monomer, part of F(1)), ATP2 (subunit beta, 3 copies per monomer, part of F(1)), ATP3 (subunit gamma, part of the central stalk), ATP4 (subunit b, part of the peripheral stalk), ATP5/OSCP (subunit 5/OSCP, part of the peripheral stalk), ATP6 (subunit a, part of the peripheral stalk), ATP7 (subunit d, part of the peripheral stalk), ATP8 (subunit 8, part of the peripheral stalk), OLI1 (subunit c, part of the rotor, 10 molecules per monomer), ATP14 (subunit h, part of the peripheral stalk), ATP15 (subunit epsilon, part of the central stalk), ATP16 (subunit delta, part of the central stalk), ATP17 (subunit f, part of the peripheral stalk), ATP18 (subunit i/j, part of the peripheral stalk), ATP19 (subunit k, dimer-specific, at interface between monomers), ATP20 (subunit g, at interface between monomers), TIM11 (subunit e, at interface between monomers).

The protein localises to the mitochondrion inner membrane. Its function is as follows. Mitochondrial membrane ATP synthase (F(1)F(0) ATP synthase or Complex V) produces ATP from ADP in the presence of a proton gradient across the membrane which is generated by electron transport complexes of the respiratory chain. F-type ATP synthases consist of two structural domains, F(1) - containing the extramembraneous catalytic core, and F(0) - containing the membrane proton channel, linked together by a central stalk and a peripheral stalk. During catalysis, ATP synthesis in the catalytic domain of F(1) is coupled via a rotary mechanism of the central stalk subunits to proton translocation. Part of the complex F(0) domain. Minor subunit located with subunit a/ATP6 in the membrane. The protein is ATP synthase subunit J, mitochondrial of Yarrowia lipolytica (strain CLIB 122 / E 150) (Yeast).